Here is a 490-residue protein sequence, read N- to C-terminus: Thyroid hormone receptor alpha (490 aa).

The disordered stretch occupies residues 1 to 32; that stretch reads MEQKPSKVECGSDPEENSARSPDGKRKRKNGQ. The segment at 1–52 is modulating; the sequence is MEQKPSKVECGSDPEENSARSPDGKRKRKNGQCSLKTSMSGYIPSYLDKDEQ. Zn(2+) is bound by residues C53, C56, C70, C73, C91, C97, C107, and C110. 2 consecutive NR C4-type zinc fingers follow at residues 53-73 and 91-115; these read CVVC…CEGC and CKYD…FKKC. Residues 53–127 constitute a DNA-binding region (nuclear receptor); sequence CVVCGDKATG…VGMAMDLVLD (75 aa). In terms of domain architecture, NR LBD spans 163 to 407; sequence EEWDLIHIAT…EGQQLLGMHV (245 aa). R228 and S277 together coordinate 3,3',5-triiodo-L-thyronine. Residues 457 to 490 are disordered; the sequence is AVCGEDDSSEADSPSSSEEEPEVCEDLAGNAASP.

Belongs to the nuclear hormone receptor family. NR1 subfamily. Binds DNA as a dimer; homodimer and heterodimer with RXRB. Interacts with NCOA3 and NCOA6 coactivators, leading to a strong increase of transcription of target genes. Probably interacts with SFPQ. Interacts with C1D. Interacts with AKAP13. Interacts with TP53INP2. Interacts with PER2. Isoform alpha-2 and isoform alpha-1 interact with TACC1, but the interaction with alpha-1 is weaker. The interaction with isoform alpha-1, but not alpha-2, is decreased in the presence of thyroid hormone T3.

It localises to the nucleus. Its subcellular location is the cytoplasm. Nuclear hormone receptor that can act as a repressor or activator of transcription. High affinity receptor for thyroid hormones, including triiodothyronine and thyroxine. Its function is as follows. Does not bind thyroid hormone and functions as a weak dominant negative inhibitor of thyroid hormone action. The polypeptide is Thyroid hormone receptor alpha (THRA) (Homo sapiens (Human)).